Reading from the N-terminus, the 350-residue chain is Transmembrane protein 185A (350 aa).

7 helical membrane passes run 16–36 (LIYA…DGII), 41–61 (WAVF…ASVG), 81–101 (FKAM…EVLV), 111–131 (FWLL…AACV), 177–197 (ILMS…VLFL), 211–231 (ITMA…EILL), and 240–260 (AFSC…LMAT). The interval 298–350 (DLHHEDSEETEETPVPEPPKIAPMFRKKARVVITQSPGKYVLPPPKLNIEMPD) is mediates interaction with MAP1B.

This sequence belongs to the TMEM185 family. Interacts with MAP1B. In terms of tissue distribution, broadly expressed in brain where it is specifically expressed by neurons (at protein level). Also detected in some cells of arterioles, intestine, lung and testis (at protein level).

The protein localises to the cell projection. It is found in the dendrite. It localises to the membrane. This is Transmembrane protein 185A (Tmem185a) from Mus musculus (Mouse).